A 124-amino-acid polypeptide reads, in one-letter code: Large ribosomal subunit protein bL12 (124 aa).

Belongs to the bacterial ribosomal protein bL12 family. Homodimer. Part of the ribosomal stalk of the 50S ribosomal subunit. Forms a multimeric L10(L12)X complex, where L10 forms an elongated spine to which 2 to 4 L12 dimers bind in a sequential fashion. Binds GTP-bound translation factors.

Functionally, forms part of the ribosomal stalk which helps the ribosome interact with GTP-bound translation factors. Is thus essential for accurate translation. In Cupriavidus pinatubonensis (strain JMP 134 / LMG 1197) (Cupriavidus necator (strain JMP 134)), this protein is Large ribosomal subunit protein bL12.